The following is a 479-amino-acid chain: UDP-N-acetylmuramate--L-alanine ligase (479 aa).

114–120 (GTHGKTT) lines the ATP pocket.

This sequence belongs to the MurCDEF family.

The protein localises to the cytoplasm. The enzyme catalyses UDP-N-acetyl-alpha-D-muramate + L-alanine + ATP = UDP-N-acetyl-alpha-D-muramoyl-L-alanine + ADP + phosphate + H(+). The protein operates within cell wall biogenesis; peptidoglycan biosynthesis. In terms of biological role, cell wall formation. The chain is UDP-N-acetylmuramate--L-alanine ligase from Pelodictyon phaeoclathratiforme (strain DSM 5477 / BU-1).